Consider the following 265-residue polypeptide: Capsule polysaccharide export inner-membrane protein CtrC (265 aa).

Transmembrane regions (helical) follow at residues Ile-37–Trp-57, Thr-67–Trp-84, Ile-121–Ile-141, Phe-148–Ile-168, Phe-178–Phe-198, and Trp-238–Phe-258. The region spanning Ile-37 to Phe-258 is the ABC transmembrane type-2 domain.

This sequence belongs to the ABC-2 integral membrane protein family.

It localises to the cell inner membrane. May form an ATP-driven capsule polysaccharide export apparatus, in association with the CtrB and CtrD proteins. This is Capsule polysaccharide export inner-membrane protein CtrC (ctrC) from Neisseria meningitidis serogroup B (strain ATCC BAA-335 / MC58).